The chain runs to 213 residues: Uracil phosphoribosyltransferase (213 aa).

Residues arginine 78, arginine 103, and aspartate 131–threonine 139 each bind 5-phospho-alpha-D-ribose 1-diphosphate. Uracil-binding positions include isoleucine 197 and glycine 202 to alanine 204. Residue aspartate 203 coordinates 5-phospho-alpha-D-ribose 1-diphosphate.

Belongs to the UPRTase family. It depends on Mg(2+) as a cofactor.

The catalysed reaction is UMP + diphosphate = 5-phospho-alpha-D-ribose 1-diphosphate + uracil. It participates in pyrimidine metabolism; UMP biosynthesis via salvage pathway; UMP from uracil: step 1/1. Allosterically activated by GTP. Its function is as follows. Catalyzes the conversion of uracil and 5-phospho-alpha-D-ribose 1-diphosphate (PRPP) to UMP and diphosphate. The polypeptide is Uracil phosphoribosyltransferase (Bifidobacterium longum (strain DJO10A)).